Here is a 255-residue protein sequence, read N- to C-terminus: MFKIGNFTLNSRLLLGTGKFDNEEIQTQAIAAAETEVLTFAVRRMNLYDKDLPNPLAKVDLSKFITFPNTAGAKTAKEAVRIAEIANHAGVCDMIKVEVIGDDETLLPDPLETYEACKVLLEKGYTVCPYISNDVVLAKRLEELGVHAIMPLASPIGTGRGINNPLNLRYIIERVNVPVIVDAGIGSPKDACHAMELGADGILLNTAISSAADPVKMAEAMNKGISAGRLSYEAGRIPVKYTAQASSPTEGIGFL.

The Schiff-base intermediate with DXP role is filled by lysine 96. Residues glycine 157, 183 to 184 (AG), and 205 to 206 (NT) contribute to the 1-deoxy-D-xylulose 5-phosphate site.

The protein belongs to the ThiG family. In terms of assembly, homotetramer. Forms heterodimers with either ThiH or ThiS.

The protein localises to the cytoplasm. It carries out the reaction [ThiS sulfur-carrier protein]-C-terminal-Gly-aminoethanethioate + 2-iminoacetate + 1-deoxy-D-xylulose 5-phosphate = [ThiS sulfur-carrier protein]-C-terminal Gly-Gly + 2-[(2R,5Z)-2-carboxy-4-methylthiazol-5(2H)-ylidene]ethyl phosphate + 2 H2O + H(+). It participates in cofactor biosynthesis; thiamine diphosphate biosynthesis. In terms of biological role, catalyzes the rearrangement of 1-deoxy-D-xylulose 5-phosphate (DXP) to produce the thiazole phosphate moiety of thiamine. Sulfur is provided by the thiocarboxylate moiety of the carrier protein ThiS. In vitro, sulfur can be provided by H(2)S. This chain is Thiazole synthase, found in Staphylococcus saprophyticus subsp. saprophyticus (strain ATCC 15305 / DSM 20229 / NCIMB 8711 / NCTC 7292 / S-41).